Reading from the N-terminus, the 150-residue chain is Ribosomal RNA large subunit methyltransferase H (150 aa).

Residues Ala100 and 118–123 (LSEMTF) each bind S-adenosyl-L-methionine.

This sequence belongs to the RNA methyltransferase RlmH family. Homodimer.

The protein localises to the cytoplasm. It carries out the reaction pseudouridine(1915) in 23S rRNA + S-adenosyl-L-methionine = N(3)-methylpseudouridine(1915) in 23S rRNA + S-adenosyl-L-homocysteine + H(+). In terms of biological role, specifically methylates the pseudouridine at position 1915 (m3Psi1915) in 23S rRNA. This Helicobacter pylori (strain ATCC 700392 / 26695) (Campylobacter pylori) protein is Ribosomal RNA large subunit methyltransferase H.